Reading from the N-terminus, the 340-residue chain is Thermopsin (340 aa).

A signal peptide spans 1–28 (MNFKSICLIILLSALIIPYIPQNIYFFP). Positions 29–41 (HRNTTGATISSGL) are excised as a propeptide. 10 N-linked (GlcNAc...) asparagine glycosylation sites follow: Asn-31, Asn-65, Asn-85, Asn-117, Asn-148, Asn-197, Asn-277, Asn-287, Asn-327, and Asn-334.

The protein belongs to the peptidase A5 family.

The protein resides in the secreted. The enzyme catalyses Specificity similar to pepsin A, prefers bulky hydrophobic side-chains on either side of the scissible bond.. Its function is as follows. May represent a new class of acid proteases. It digests proteins and peptides in acidic solution. The sequence is that of Thermopsin (thpS) from Sulfolobus acidocaldarius (strain ATCC 33909 / DSM 639 / JCM 8929 / NBRC 15157 / NCIMB 11770).